The primary structure comprises 152 residues: Ribosome maturation factor RimP (152 aa).

It belongs to the RimP family.

The protein resides in the cytoplasm. In terms of biological role, required for maturation of 30S ribosomal subunits. This chain is Ribosome maturation factor RimP, found in Desulfitobacterium hafniense (strain Y51).